The following is a 313-amino-acid chain: N-acetyl-gamma-glutamyl-phosphate reductase (313 aa).

C117 is a catalytic residue.

The protein belongs to the NAGSA dehydrogenase family. Type 2 subfamily.

The protein resides in the cytoplasm. It catalyses the reaction N-acetyl-L-glutamate 5-semialdehyde + phosphate + NADP(+) = N-acetyl-L-glutamyl 5-phosphate + NADPH + H(+). It functions in the pathway amino-acid biosynthesis; L-arginine biosynthesis; N(2)-acetyl-L-ornithine from L-glutamate: step 3/4. Its function is as follows. Catalyzes the NADPH-dependent reduction of N-acetyl-5-glutamyl phosphate to yield N-acetyl-L-glutamate 5-semialdehyde. In Burkholderia cenocepacia (strain ATCC BAA-245 / DSM 16553 / LMG 16656 / NCTC 13227 / J2315 / CF5610) (Burkholderia cepacia (strain J2315)), this protein is N-acetyl-gamma-glutamyl-phosphate reductase.